A 288-amino-acid chain; its full sequence is Thymidylate synthase (288 aa).

Residue Arg-21 participates in dUMP binding. His-51 lines the (6R)-5,10-methylene-5,6,7,8-tetrahydrofolate pocket. Residue 150 to 151 (RR) participates in dUMP binding. Cys-170 functions as the Nucleophile in the catalytic mechanism. DUMP contacts are provided by residues 190–193 (RSGD), Asn-201, and 231–233 (HIY). Residue Asp-193 coordinates (6R)-5,10-methylene-5,6,7,8-tetrahydrofolate. Ala-287 contributes to the (6R)-5,10-methylene-5,6,7,8-tetrahydrofolate binding site.

It belongs to the thymidylate synthase family. Bacterial-type ThyA subfamily. As to quaternary structure, homodimer.

The protein localises to the cytoplasm. The enzyme catalyses dUMP + (6R)-5,10-methylene-5,6,7,8-tetrahydrofolate = 7,8-dihydrofolate + dTMP. Its pathway is pyrimidine metabolism; dTTP biosynthesis. Its function is as follows. Catalyzes the reductive methylation of 2'-deoxyuridine-5'-monophosphate (dUMP) to 2'-deoxythymidine-5'-monophosphate (dTMP) while utilizing 5,10-methylenetetrahydrofolate (mTHF) as the methyl donor and reductant in the reaction, yielding dihydrofolate (DHF) as a by-product. This enzymatic reaction provides an intracellular de novo source of dTMP, an essential precursor for DNA biosynthesis. This chain is Thymidylate synthase, found in Mycoplasma mobile (strain ATCC 43663 / 163K / NCTC 11711) (Mesomycoplasma mobile).